Consider the following 99-residue polypeptide: DNA-binding protein Fis (99 aa).

Residues 75-94 (QTRAANMLGINRGTLRKKLK) constitute a DNA-binding region (H-T-H motif).

This sequence belongs to the transcriptional regulatory Fis family. Homodimer.

Activates ribosomal RNA transcription. Plays a direct role in upstream activation of rRNA promoters. The sequence is that of DNA-binding protein Fis from Haemophilus influenzae (strain PittEE).